Here is a 169-residue protein sequence, read N- to C-terminus: Small ribosomal subunit protein uS5 (169 aa).

In terms of domain architecture, S5 DRBM spans Met14–Val77.

Belongs to the universal ribosomal protein uS5 family. In terms of assembly, part of the 30S ribosomal subunit. Contacts proteins S4 and S8.

Functionally, with S4 and S12 plays an important role in translational accuracy. Located at the back of the 30S subunit body where it stabilizes the conformation of the head with respect to the body. This Alkaliphilus metalliredigens (strain QYMF) protein is Small ribosomal subunit protein uS5.